The primary structure comprises 549 residues: Glucose-6-phosphate isomerase (549 aa).

The Proton donor role is filled by glutamate 355. Residues histidine 387 and lysine 515 contribute to the active site.

The protein belongs to the GPI family.

Its subcellular location is the cytoplasm. It carries out the reaction alpha-D-glucose 6-phosphate = beta-D-fructose 6-phosphate. It functions in the pathway carbohydrate biosynthesis; gluconeogenesis. It participates in carbohydrate degradation; glycolysis; D-glyceraldehyde 3-phosphate and glycerone phosphate from D-glucose: step 2/4. Its function is as follows. Catalyzes the reversible isomerization of glucose-6-phosphate to fructose-6-phosphate. The sequence is that of Glucose-6-phosphate isomerase from Haemophilus influenzae (strain PittGG).